Reading from the N-terminus, the 149-residue chain is Calmodulin (149 aa).

Position 2 is an N-acetylalanine (alanine 2). 4 EF-hand domains span residues 8–43, 44–79, 81–116, and 117–149; these read EQIA…LGQN, PTEA…KMKD, DTEE…LGEK, and LTDE…MMAK. Residues aspartate 21, aspartate 23, aspartate 25, threonine 27, glutamate 32, aspartate 57, aspartate 59, asparagine 61, threonine 63, glutamate 68, aspartate 94, aspartate 96, asparagine 98, and glutamate 105 each contribute to the Ca(2+) site. The residue at position 116 (lysine 116) is an N6,N6,N6-trimethyllysine. Ca(2+) contacts are provided by aspartate 130, aspartate 132, aspartate 134, glutamine 136, and glutamate 141.

The protein belongs to the calmodulin family.

In terms of biological role, calmodulin mediates the control of a large number of enzymes, ion channels and other proteins by Ca(2+). Among the enzymes to be stimulated by the calmodulin-Ca(2+) complex are a number of protein kinases and phosphatases. The chain is Calmodulin from Heterocapsa triquetra (Dinoflagellate).